The primary structure comprises 425 residues: Ribosome biogenesis protein WDR12 homolog (425 aa).

The tract at residues 13 to 94 (LQLHLITKQK…EDTVELEYVE (82 aa)) is ubiquitin-like (UBL) domain. WD repeat units lie at residues 106–143 (LHDDWVSAVEARDNWILTGCYDNTLNLWTTKGKHKLTI), 145–187 (GHIA…NSVE), 194–233 (GHERGVDCIAANGSKTKMATGSWDTMLKIWSTDVRSGGGD), 258–296 (GHRECISGVQWIDDNTLVTSSWDHTIKIWDLALNGIKSE), 298–337 (SGNKSFFDLSYSKLNGLIITASPDKNLRLYDPKSNQGTLV), 343–383 (GHTQ…APIF), and 387–425 (GHEDKVLACDWSNPRFILSGGSDNSVRVFKSKIAIGGEK). Residues 227-247 (VRSGGGDSEPSTSKRQKLDQG) form a disordered region.

It belongs to the WD repeat WDR12/YTM1 family.

Its subcellular location is the nucleus. It is found in the nucleolus. The protein resides in the nucleoplasm. Its function is as follows. Required for maturation of ribosomal RNAs and formation of the large ribosomal subunit. This is Ribosome biogenesis protein WDR12 homolog from Culex quinquefasciatus (Southern house mosquito).